Consider the following 378-residue polypeptide: C-X-C chemokine receptor type 3-2 (378 aa).

At 1–47 the chain is on the extracellular side; sequence MDNSTTAAEVSAPTDYDYNSTSYDDDNPYAAPCSLTETWNFLGRFAP. Residues Asn-3 and Asn-19 are each glycosylated (N-linked (GlcNAc...) asparagine). A helical transmembrane segment spans residues 48 to 68; that stretch reads VAYILVFILALVGNILVLCVI. The Cytoplasmic portion of the chain corresponds to 69 to 86; that stretch reads RRYRQSRHSPCSFSLTDT. The chain crosses the membrane as a helical span at residues 87 to 107; it reads FLLHLAVSDLLLAATLPFFAV. At 108–121 the chain is on the extracellular side; sequence EWISEWVFGKVMCK. A disulfide bridge links Cys-120 with Cys-199. A helical membrane pass occupies residues 122 to 142; the sequence is ITGALFSLNVYCGVLFLACIS. Over 143–164 the chain is Cytoplasmic; sequence FDRYLAIVHAINISWRRKTCHA. Residues 165-185 traverse the membrane as a helical segment; sequence QLACAFIWVICLGLSMVDMHF. The Extracellular segment spans residues 186–212; the sequence is RDLVEIPGMNRMVCQIVYSEQYSKQWQ. Residues 213–233 traverse the membrane as a helical segment; sequence IGMQLVSMVLGFILPLLVMLY. Residues 234–253 lie on the Cytoplasmic side of the membrane; that stretch reads CYLHIFKALCHATRRQKRRS. Residues 254-274 form a helical membrane-spanning segment; sequence LRLIISLVIVFVISWAPYNAL. Over 275 to 304 the chain is Extracellular; the sequence is RMTDSLQMLGVIVKSCALNNVLDVGILVTE. A helical membrane pass occupies residues 305-325; that stretch reads SLGLAHCALNPLLYGLVGVKF. The Cytoplasmic segment spans residues 326–378; the sequence is RRELAQMCKAALGPQGCLGLVGWANGRGSSTRRPTGSFSSVETENTSYFSVMA.

This sequence belongs to the G-protein coupled receptor 1 family.

It is found in the cell membrane. Its function is as follows. Receptor for the C-X-C chemokines cxcl11.1 and cxcl11.6. Promotes macrophage chemotaxis to sites of bacterial infection. The chain is C-X-C chemokine receptor type 3-2 from Danio rerio (Zebrafish).